We begin with the raw amino-acid sequence, 334 residues long: Catabolite repressor/activator (334 aa).

An HTH lacI-type domain is found at 1–58; sequence MKLDEIARLAGVSRTTASYVINGKAKQYRVSDKTVEKVMAVVREHNYHPNAVAAGLRA. Residues 3 to 22 constitute a DNA-binding region (H-T-H motif); the sequence is LDEIARLAGVSRTTASYVIN.

Homotetramer.

In terms of biological role, global transcriptional regulator, which plays an important role in the regulation of carbon metabolism. The chain is Catabolite repressor/activator (cra) from Salmonella typhimurium (strain LT2 / SGSC1412 / ATCC 700720).